The chain runs to 256 residues: Floral homeotic protein APETALA 1-1 (256 aa).

The MADS-box domain occupies 1 to 61 (MGRGRVQLKR…GKLFEYSTDS (61 aa)). A K-box domain is found at 88-178 (NTNWSMEYNR…SKQIKEREKV (91 aa)).

Homodimer capable of binding to CArG-box sequences. Expressed in some of the meristems of arrest-stage broccoli heads.

The protein localises to the nucleus. Its function is as follows. Transcription factor that promotes early floral meristem identity in synergy with LEAFY. Displays a redundant function with CAULIFLOWER in the up-regulation of LEAFY. Required subsequently for the transition of an inflorescence meristem into a floral meristem, and for the normal development of sepals and petals in flowers. Regulates positively B class homeotic proteins. This Brassica oleracea var. italica (Broccoli) protein is Floral homeotic protein APETALA 1-1 (1AP1).